We begin with the raw amino-acid sequence, 417 residues long: Serpin H1 (417 aa).

The signal sequence occupies residues Met-1–Ala-17. Lys-93 carries the N6-succinyllysine modification. Asn-119 and Asn-124 each carry an N-linked (GlcNAc...) asparagine glycan. At Ser-140 the chain carries Phosphoserine. The residue at position 206 (Lys-206) is an N6-acetyllysine. Lys-295 is modified (N6-succinyllysine). Lys-318 is subject to N6-acetyllysine. N-linked (GlcNAc...) asparagine glycosylation is present at Asn-394. A Prevents secretion from ER motif is present at residues Arg-414 to Leu-417.

It belongs to the serpin family.

It is found in the endoplasmic reticulum lumen. Its function is as follows. Binds specifically to collagen. Could be involved as a chaperone in the biosynthetic pathway of collagen. In Rattus norvegicus (Rat), this protein is Serpin H1 (Serpinh1).